The primary structure comprises 473 residues: Ribulose bisphosphate carboxylase large chain (473 aa).

Residues Asn-116 and Thr-166 each coordinate substrate. The Proton acceptor role is filled by Lys-168. Residue Lys-170 participates in substrate binding. Mg(2+) is bound by residues Lys-194, Asp-196, and Glu-197. N6-carboxylysine is present on Lys-194. His-287 serves as the catalytic Proton acceptor. Substrate is bound by residues Arg-288, His-320, and Ser-372.

It belongs to the RuBisCO large chain family. Type I subfamily. As to quaternary structure, heterohexadecamer of 8 large chains and 8 small chains. In R.sphaeroides the complex is approximately 500 kDa. The cofactor is Mg(2+).

The catalysed reaction is 2 (2R)-3-phosphoglycerate + 2 H(+) = D-ribulose 1,5-bisphosphate + CO2 + H2O. It carries out the reaction D-ribulose 1,5-bisphosphate + O2 = 2-phosphoglycolate + (2R)-3-phosphoglycerate + 2 H(+). Its function is as follows. RuBisCO catalyzes two reactions: the carboxylation of D-ribulose 1,5-bisphosphate, the primary event in carbon dioxide fixation, as well as the oxidative fragmentation of the pentose substrate. Both reactions occur simultaneously and in competition at the same active site. This chain is Ribulose bisphosphate carboxylase large chain, found in Thiobacillus denitrificans (strain ATCC 25259 / T1).